The chain runs to 296 residues: Pantothenate synthetase (296 aa).

Methionine 31–histidine 38 lines the ATP pocket. Residue histidine 38 is the Proton donor of the active site. Glutamine 62 contacts (R)-pantoate. Glutamine 62 serves as a coordination point for beta-alanine. Residue glycine 148–aspartate 151 participates in ATP binding. Position 154 (glutamine 154) interacts with (R)-pantoate. ATP contacts are provided by residues valine 177 and leucine 185–arginine 188.

It belongs to the pantothenate synthetase family. As to quaternary structure, homodimer.

It localises to the cytoplasm. The enzyme catalyses (R)-pantoate + beta-alanine + ATP = (R)-pantothenate + AMP + diphosphate + H(+). The protein operates within cofactor biosynthesis; (R)-pantothenate biosynthesis; (R)-pantothenate from (R)-pantoate and beta-alanine: step 1/1. Its function is as follows. Catalyzes the condensation of pantoate with beta-alanine in an ATP-dependent reaction via a pantoyl-adenylate intermediate. This is Pantothenate synthetase from Deinococcus geothermalis (strain DSM 11300 / CIP 105573 / AG-3a).